Reading from the N-terminus, the 716-residue chain is Polyribonucleotide nucleotidyltransferase (716 aa).

The Mg(2+) site is built by aspartate 485 and aspartate 491. The 60-residue stretch at proline 552 to isoleucine 611 folds into the KH domain. Residues glycine 621–lysine 689 form the S1 motif domain. The span at lysine 689 to proline 698 shows a compositional bias: basic and acidic residues. A disordered region spans residues lysine 689 to glutamate 716. The span at alanine 707–glutamate 716 shows a compositional bias: acidic residues.

This sequence belongs to the polyribonucleotide nucleotidyltransferase family. In terms of assembly, component of the RNA degradosome, which is a multiprotein complex involved in RNA processing and mRNA degradation. Mg(2+) serves as cofactor.

It localises to the cytoplasm. The enzyme catalyses RNA(n+1) + phosphate = RNA(n) + a ribonucleoside 5'-diphosphate. Functionally, involved in mRNA degradation. Catalyzes the phosphorolysis of single-stranded polyribonucleotides processively in the 3'- to 5'-direction. In Idiomarina loihiensis (strain ATCC BAA-735 / DSM 15497 / L2-TR), this protein is Polyribonucleotide nucleotidyltransferase.